Consider the following 106-residue polypeptide: Biogenesis of lysosome-related organelles complex 1 subunit BLS1 (106 aa).

The protein belongs to the BLOC1S1 family. As to quaternary structure, component of the biogenesis of lysosome-related organelles complex-1 (BLOC-1).

The protein resides in the endosome. Its function is as follows. Component of the biogenesis of lysosome-related organelles complex-1 (BLOC-1), a complex involved in endosomal cargo sorting. The protein is Biogenesis of lysosome-related organelles complex 1 subunit BLS1 (BLS1) of Candida glabrata (strain ATCC 2001 / BCRC 20586 / JCM 3761 / NBRC 0622 / NRRL Y-65 / CBS 138) (Yeast).